The following is a 59-amino-acid chain: UPF0434 protein Shew_1640 (59 aa).

Belongs to the UPF0434 family.

The sequence is that of UPF0434 protein Shew_1640 from Shewanella loihica (strain ATCC BAA-1088 / PV-4).